A 396-amino-acid polypeptide reads, in one-letter code: Lipid-A-disaccharide synthase (396 aa).

This sequence belongs to the LpxB family.

The enzyme catalyses a lipid X + a UDP-2-N,3-O-bis[(3R)-3-hydroxyacyl]-alpha-D-glucosamine = a lipid A disaccharide + UDP + H(+). Its pathway is bacterial outer membrane biogenesis; LPS lipid A biosynthesis. In terms of biological role, condensation of UDP-2,3-diacylglucosamine and 2,3-diacylglucosamine-1-phosphate to form lipid A disaccharide, a precursor of lipid A, a phosphorylated glycolipid that anchors the lipopolysaccharide to the outer membrane of the cell. The chain is Lipid-A-disaccharide synthase from Nitrobacter hamburgensis (strain DSM 10229 / NCIMB 13809 / X14).